A 353-amino-acid chain; its full sequence is DNA-directed RNA polymerase subunit alpha (353 aa).

Residues 1–226 (MLISQRPTLT…ELFGLARELN (226 aa)) are alpha N-terminal domain (alpha-NTD). The segment at 241–353 (ADHIASFGLP…TEDYAETEQL (113 aa)) is alpha C-terminal domain (alpha-CTD). The segment at 326–353 (ATGTWSDTDAGSFGDAEGTEDYAETEQL) is disordered. Residues 342-353 (EGTEDYAETEQL) show a composition bias toward acidic residues.

This sequence belongs to the RNA polymerase alpha chain family. In terms of assembly, homodimer. The RNAP catalytic core consists of 2 alpha, 1 beta, 1 beta' and 1 omega subunit. When a sigma factor is associated with the core the holoenzyme is formed, which can initiate transcription.

It catalyses the reaction RNA(n) + a ribonucleoside 5'-triphosphate = RNA(n+1) + diphosphate. Its function is as follows. DNA-dependent RNA polymerase catalyzes the transcription of DNA into RNA using the four ribonucleoside triphosphates as substrates. The chain is DNA-directed RNA polymerase subunit alpha from Rhodococcus jostii (strain RHA1).